Consider the following 243-residue polypeptide: Putative ABC transporter arginine-binding protein 2 (243 aa).

The signal sequence occupies residues 1 to 19; that stretch reads MKKVLIAALIAGFSLSATA.

The protein belongs to the bacterial solute-binding protein 3 family. As to quaternary structure, the complex is composed of two ATP-binding proteins (ArtP), two transmembrane proteins (ArtM and ArtQ) and two solute-binding proteins (ArtJ and ArtI).

Its subcellular location is the periplasm. Part of the ABC transporter complex ArtPIQMJ involved in arginine transport. The sequence is that of Putative ABC transporter arginine-binding protein 2 (artI) from Escherichia coli (strain K12).